The chain runs to 375 residues: Enoyl-[acyl-carrier-protein] reductase, mitochondrial (375 aa).

Residues 1–37 constitute a mitochondrion transit peptide; it reads MAALMESVVGRALKFSSTANFRSIRRGETPTLCIKSF. Tyr-96 (proton donor) is an active-site residue. NADP(+)-binding positions include Asn-169, 195–198, 218–220, 287–290, 312–314, and Lys-370; these read TSIV, RDR, YGGM, and FWL.

The protein belongs to the zinc-containing alcohol dehydrogenase family. Quinone oxidoreductase subfamily. As to quaternary structure, homodimer.

It localises to the mitochondrion. It catalyses the reaction a 2,3-saturated acyl-[ACP] + NADP(+) = a (2E)-enoyl-[ACP] + NADPH + H(+). In terms of biological role, catalyzes the NADPH-dependent reduction of trans-2-enoyl thioesters in mitochondrial fatty acid synthesis (fatty acid synthesis type II). Fatty acid chain elongation in mitochondria uses acyl carrier protein (ACP) as an acyl group carrier, but the enzyme accepts both ACP and CoA thioesters as substrates in vitro. This Arabidopsis thaliana (Mouse-ear cress) protein is Enoyl-[acyl-carrier-protein] reductase, mitochondrial.